A 109-amino-acid chain; its full sequence is uncharacterized protein (109 aa).

Residues 63-109 are disordered; it reads DPSTWEPEEHETEHCRGHTLPEKKQKPQGGHGSDKDEDKGNCGCDHC. Composition is skewed to basic and acidic residues over residues 73-87 and 94-109; these read ETEHCRGHTLPEKKQ and GSDKDEDKGNCGCDHC.

This is an uncharacterized protein from Caenorhabditis elegans.